The chain runs to 359 residues: Phosphate acyltransferase (359 aa).

The tract at residues 337-359 (AAGAAQPAPETEVPGAHPSPHVA) is disordered.

This sequence belongs to the PlsX family. As to quaternary structure, homodimer. Probably interacts with PlsY.

The protein localises to the cytoplasm. It carries out the reaction a fatty acyl-[ACP] + phosphate = an acyl phosphate + holo-[ACP]. It participates in lipid metabolism; phospholipid metabolism. In terms of biological role, catalyzes the reversible formation of acyl-phosphate (acyl-PO(4)) from acyl-[acyl-carrier-protein] (acyl-ACP). This enzyme utilizes acyl-ACP as fatty acyl donor, but not acyl-CoA. The chain is Phosphate acyltransferase from Cupriavidus necator (strain ATCC 17699 / DSM 428 / KCTC 22496 / NCIMB 10442 / H16 / Stanier 337) (Ralstonia eutropha).